Reading from the N-terminus, the 486-residue chain is 2-hydroxymuconic semialdehyde dehydrogenase (486 aa).

Catalysis depends on residues glutamate 254 and cysteine 288.

The protein belongs to the aldehyde dehydrogenase family. Homodimer.

It carries out the reaction (2Z,4E)-2-hydroxy-6-oxohexa-2,4-dienoate + NAD(+) + H2O = (2Z,4E)-2-hydroxyhexa-2,4-dienedioate + NADH + 2 H(+). The protein operates within aromatic compound metabolism; benzoate degradation via hydroxylation. Its function is as follows. 2-hydroxymuconic acid semialdehyde can be converted to 2-hydroxypent-2,4-dienoate either directly by the action of 2-hydroxymuconic semialdehyde hydrolase (HMSH) or by the action of three sequential enzymes, the first of which is HMSD. Can oxidize not only 2-hydroxymuconic semialdehyde and its analogs but also benzaldehyde and its analogs. This chain is 2-hydroxymuconic semialdehyde dehydrogenase (xylG), found in Pseudomonas putida (Arthrobacter siderocapsulatus).